Here is a 524-residue protein sequence, read N- to C-terminus: Alkaline phosphatase, tissue-nonspecific isozyme (524 aa).

The signal sequence occupies residues 1–17 (MISPFLVLAIGTCLTNS). Asp60 is a binding site for Mg(2+). Positions 60 and 110 each coordinate Zn(2+). Ser110 acts as the Phosphoserine intermediate in catalysis. Position 110 is a phosphoserine (Ser110). A disulfide bridge links Cys139 with Cys201. The N-linked (GlcNAc...) asparagine glycan is linked to Asn140. Residue Thr173 participates in Mg(2+) binding. A glycan (N-linked (GlcNAc...) asparagine) is linked at Asn230. Glu235 is a binding site for Ca(2+). An N-linked (GlcNAc...) asparagine glycan is attached at Asn271. Phe290 and Glu291 together coordinate Ca(2+). Asn303 carries an N-linked (GlcNAc...) asparagine glycan. Asp306 is a Ca(2+) binding site. Mg(2+) is bound at residue Glu332. Zn(2+) is bound by residues Asp337, His341, Asp378, and His379. Residue Asn430 is glycosylated (N-linked (GlcNAc...) asparagine). Position 454 (His454) interacts with Zn(2+). A disulfide bridge connects residues Cys489 and Cys497. Ser501 carries GPI-anchor amidated serine lipidation. Positions 502-524 (SAGSLAAGPLLLALALYPLSVLF) are cleaved as a propeptide — removed in mature form.

This sequence belongs to the alkaline phosphatase family. In terms of assembly, homodimer. Requires Mg(2+) as cofactor. The cofactor is Zn(2+). It depends on Ca(2+) as a cofactor. Post-translationally, N-glycosylated.

The protein resides in the cell membrane. The protein localises to the extracellular vesicle membrane. It is found in the mitochondrion membrane. It localises to the mitochondrion intermembrane space. The enzyme catalyses a phosphate monoester + H2O = an alcohol + phosphate. The catalysed reaction is diphosphate + H2O = 2 phosphate + H(+). It carries out the reaction pyridoxal 5'-phosphate + H2O = pyridoxal + phosphate. It catalyses the reaction phosphoethanolamine + H2O = ethanolamine + phosphate. The enzyme catalyses N-phosphocreatine + H2O = creatine + phosphate. The catalysed reaction is ATP + H2O = ADP + phosphate + H(+). It carries out the reaction ADP + H2O = AMP + phosphate + H(+). It catalyses the reaction AMP + H2O = adenosine + phosphate. Its activity is regulated as follows. Phosphatase activity is specifically inhibited by 5-((5-chloro-2-methoxyphenyl)sulfonamido)nicotinamide (SBI-425). Alkaline phosphatase that metabolizes various phosphate compounds and plays a key role in skeletal mineralization and adaptive thermogenesis. Has broad substrate specificity and can hydrolyze a considerable variety of compounds: however, only a few substrates, such as diphosphate (inorganic pyrophosphate; PPi), pyridoxal 5'-phosphate (PLP) and N-phosphocreatine are natural substrates. Plays an essential role in skeletal and dental mineralization via its ability to hydrolyze extracellular diphosphate, a potent mineralization inhibitor, to phosphate: it thereby promotes hydroxyapatite crystal formation and increases inorganic phosphate concentration. Acts in a non-redundant manner with PHOSPHO1 in skeletal mineralization: while PHOSPHO1 mediates the initiation of hydroxyapatite crystallization in the matrix vesicles (MVs), ALPL/TNAP catalyzes the spread of hydroxyapatite crystallization in the extracellular matrix. Also promotes dephosphorylation of osteopontin (SSP1), an inhibitor of hydroxyapatite crystallization in its phosphorylated state; it is however unclear whether ALPL/TNAP mediates SSP1 dephosphorylation via a direct or indirect manner. Catalyzes dephosphorylation of PLP to pyridoxal (PL), the transportable form of vitamin B6, in order to provide a sufficient amount of PLP in the brain, an essential cofactor for enzymes catalyzing the synthesis of diverse neurotransmitters. Additionally, also able to mediate ATP degradation in a stepwise manner to adenosine, thereby regulating the availability of ligands for purinergic receptors. Also capable of dephosphorylating microbial products, such as lipopolysaccharides (LPS) as well as other phosphorylated small-molecules, such as poly-inosine:cytosine (poly I:C). Acts as a key regulator of adaptive thermogenesis as part of the futile creatine cycle: localizes to the mitochondria of thermogenic fat cells and acts by mediating hydrolysis of N-phosphocreatine to initiate a futile cycle of creatine dephosphorylation and phosphorylation. During the futile creatine cycle, creatine and N-phosphocreatine are in a futile cycle, which dissipates the high energy charge of N-phosphocreatine as heat without performing any mechanical or chemical work. In Homo sapiens (Human), this protein is Alkaline phosphatase, tissue-nonspecific isozyme.